The primary structure comprises 848 residues: Mitochondrial escape protein 2 (848 aa).

A mitochondrion-targeting transit peptide spans 1–42 (MNSITTPRMGATILRTIAPNVGVLSQVLPLGLRRVYPRGVRW). Residues 43 to 284 (VSSEIQQKDR…IRNFYVTHTR (242 aa)) lie on the Mitochondrial matrix side of the membrane. The RRM domain occupies 196-269 (TTVIIKCQGP…TVLHLQYENV (74 aa)). Residues 285–305 (IAIPVTFALLSILAVLIFDPI) form a helical membrane-spanning segment. Over 306 to 848 (REFFIEQKIT…LSQESNNRRK (543 aa)) the chain is Mitochondrial intermembrane. Residues 603 to 627 (RAKKAEEDEPTEKASPEHSQYDEND) form a disordered region. Residues 613 to 627 (TEKASPEHSQYDEND) are compositionally biased toward basic and acidic residues.

Belongs to the YME2 family.

Its subcellular location is the mitochondrion inner membrane. In terms of biological role, plays a role in maintaining the mitochondrial genome and in controlling the mtDNA escape. Involved in the regulation of mtDNA nucleotide structure and number. May have a dispensable role in early maturation of pre-rRNA. This is Mitochondrial escape protein 2 (YME2) from Candida glabrata (strain ATCC 2001 / BCRC 20586 / JCM 3761 / NBRC 0622 / NRRL Y-65 / CBS 138) (Yeast).